Reading from the N-terminus, the 275-residue chain is Probable siderophore transport system ATP-binding protein YusV (275 aa).

Positions 6-242 (ISTETLSLGY…DLVQNVFSMN (237 aa)) constitute an ABC transporter domain. ATP is bound at residue 38-45 (GSNGCGKS).

The protein belongs to the ABC transporter superfamily. As to quaternary structure, the iron-hydroxamate siderophore complex is composed of one ATP-binding protein (YusV), two transmembrane proteins (YfiZ and YfhA) and a solute-binding protein (YfiY); the catechoplate siderophore complex is composed of one ATP-binding protein (YusV), two transmembrane proteins (FeuB and FeuC) and a solute-binding protein (FeuA).

The protein localises to the cell membrane. Its function is as follows. Provides the ATPase subunit for at least 2 ABC transporter complexes; YfiYZ/YfhA/YusV involved in import of the iron-hydroxamate siderophores schizokinen, arthrobactin and corprogen, and FeuABC/YusV involved in import of the catecholate siderophores bacillibactin and enterobactin. Probably responsible for energy coupling to the transport system. This is Probable siderophore transport system ATP-binding protein YusV (yusV) from Bacillus subtilis (strain 168).